The chain runs to 620 residues: 1-deoxy-D-xylulose-5-phosphate synthase (620 aa).

Thiamine diphosphate-binding positions include His75 and 116–118; that span reads AHS. Asp147 is a binding site for Mg(2+). Thiamine diphosphate-binding positions include 148 to 149, Asn177, Tyr284, and Glu366; that span reads GA. Asn177 lines the Mg(2+) pocket.

It belongs to the transketolase family. DXPS subfamily. In terms of assembly, homodimer. Mg(2+) serves as cofactor. Thiamine diphosphate is required as a cofactor.

It carries out the reaction D-glyceraldehyde 3-phosphate + pyruvate + H(+) = 1-deoxy-D-xylulose 5-phosphate + CO2. It functions in the pathway metabolic intermediate biosynthesis; 1-deoxy-D-xylulose 5-phosphate biosynthesis; 1-deoxy-D-xylulose 5-phosphate from D-glyceraldehyde 3-phosphate and pyruvate: step 1/1. In terms of biological role, catalyzes the acyloin condensation reaction between C atoms 2 and 3 of pyruvate and glyceraldehyde 3-phosphate to yield 1-deoxy-D-xylulose-5-phosphate (DXP). The sequence is that of 1-deoxy-D-xylulose-5-phosphate synthase from Bordetella pertussis (strain Tohama I / ATCC BAA-589 / NCTC 13251).